Reading from the N-terminus, the 397-residue chain is S-layer protein B (397 aa).

The signal sequence occupies residues 1–24 (MVVKKTFVLSTLILISVVALVSTA). Positions 259–314 (INALNNEVSTLRSEISSLNSTIASLNKSLANANTQISNLQSEITTLNSEIGKLNST) form a coiled coil. A helical transmembrane segment spans residues 373-393 (GGIIAGIIGLIVAIVAIVLVM).

Belongs to the Sulfolobales SlaB family. The mushroom-shaped unit cells of the Sulfolobales' S-layers may consist of three SlaB subunits and six SlaA subunits.

Its subcellular location is the secreted. It localises to the cell wall. The protein resides in the S-layer. The protein localises to the cell membrane. In terms of biological role, S-layer small protein. May anchor the complex to the cell membrane. The chain is S-layer protein B from Saccharolobus solfataricus (strain ATCC 35092 / DSM 1617 / JCM 11322 / P2) (Sulfolobus solfataricus).